Here is a 644-residue protein sequence, read N- to C-terminus: Threonine--tRNA ligase (644 aa).

The TGS domain maps to 1-61; sequence MVAITLPDGS…AHDAKVEIVT (61 aa). A catalytic region spans residues 242–533; the sequence is DHRKIGKALN…LIENYAGWMP (292 aa). Zn(2+) contacts are provided by Cys-333, His-384, and His-510.

It belongs to the class-II aminoacyl-tRNA synthetase family. In terms of assembly, homodimer. Zn(2+) serves as cofactor.

It is found in the cytoplasm. The enzyme catalyses tRNA(Thr) + L-threonine + ATP = L-threonyl-tRNA(Thr) + AMP + diphosphate + H(+). Catalyzes the attachment of threonine to tRNA(Thr) in a two-step reaction: L-threonine is first activated by ATP to form Thr-AMP and then transferred to the acceptor end of tRNA(Thr). Also edits incorrectly charged L-seryl-tRNA(Thr). The polypeptide is Threonine--tRNA ligase (Psychrobacter cryohalolentis (strain ATCC BAA-1226 / DSM 17306 / VKM B-2378 / K5)).